A 253-amino-acid chain; its full sequence is Transcription factor bHLH106 (253 aa).

The region spanning 66–115 (AALRNHKEAERRRRERINSHLNKLRNVLSCNSKTDKATLLAKVVQRVREL) is the bHLH domain.

Homodimer.

It is found in the nucleus. The polypeptide is Transcription factor bHLH106 (BHLH106) (Arabidopsis thaliana (Mouse-ear cress)).